Here is a 302-residue protein sequence, read N- to C-terminus: Nucleotide-binding protein SERP0433 (302 aa).

An ATP-binding site is contributed by 18–25; the sequence is GMSGAGKS. Residue 69-72 coordinates GTP; that stretch reads DLRG.

Belongs to the RapZ-like family.

Its function is as follows. Displays ATPase and GTPase activities. This is Nucleotide-binding protein SERP0433 from Staphylococcus epidermidis (strain ATCC 35984 / DSM 28319 / BCRC 17069 / CCUG 31568 / BM 3577 / RP62A).